The following is a 763-amino-acid chain: MEKITEKILLEKSSTKTNKLDQIKTLNLSRMSLKSEDLPVPLLSKLCRLEKLDLSGNMLQKIPKGLRLPCLKILNCSNNDMEDVLSLEALTNLEELRLEDNLYLTVNDEHKVIFLLPNLRMFNGKDISSTAHHIRHGSTEILRKRVIGVWERDFSLPDPISAKSLAAVEKSFVNAACTQVKYGPNSLSDYTKWRVEKIAKEYLKSLTSSEEEERVADTTPTKENKTKACDVGGNSITSPQKRTRNNTDVVAEASPRKSSRLVSAAPVEASPRKSARVLNTPQKTQPVVSSPRKHARLTSAETPESSPRKSSRLENVTQKAASQTESPRKPGMSTPTSKQAKCESPRKQSKQSTAKMEKSTPRKTTKAKLQVPQEPVSLTPLHVLQCHSRQNDPDDFSTQLWACAFEPQQDDSIDISGGSQTIATCGGETLCVINCESGLVLKKYKVPGEDFFSLAWSTVLMSRTGGSARPCNILAAGGKRGCVKLIHPRVNLAFGEFRVSRRAISIMRFNPRKPTFLFTGTYDKKIFLWDIGGLDQDYNFKISKLLTLETSSTPLHLALLPSSPDTHLLSGCDEGLYCFDVQLSKNTLKRNEEIEIVFPIYKKNDKKNNYRTIDGLSFLSDDVVASKSHMQGSIYLWSWSATRASWNSRKKEVPAVILAELQWSSTDIPYLSLGTCPGYGYVVCGDEQGRLWMYHITDTMMENFKSGKTISATEVLQWPSPIRAGKGALEGPSINSTAMDPGLHYLVALTDKNMVVVWKRESH.

LRR repeat units follow at residues 22-43 (QIKTLNLSRMSLKSEDLPVPLL), 48-69 (RLEKLDLSGNMLQKIPKGLRLP), 70-91 (CLKILNCSNNDMEDVLSLEALT), and 92-113 (NLEELRLEDNLYLTVNDEHKVI). A disordered region spans residues 206–372 (LTSSEEEERV…KTTKAKLQVP (167 aa)). Position 270 is a phosphoserine (serine 270). The segment covering 277–288 (VLNTPQKTQPVV) has biased composition (polar residues). Threonine 280 carries the phosphothreonine modification. At serine 290 the chain carries Phosphoserine. Residues 313–325 (LENVTQKAASQTE) show a composition bias toward polar residues. WD repeat units lie at residues 499–539 (VSRR…QDYN), 608–647 (NNYRTIDGLSFLSDDVVASKSHMQGSIYLWSWSATRASWN), 653–704 (VPAV…MENF), and 729–763 (LEGPSINSTAMDPGLHYLVALTDKNMVVVWKRESH).

The protein belongs to the LRWD1 family. As to quaternary structure, component of the ORC complex.

The protein localises to the nucleus. It is found in the chromosome. Its subcellular location is the centromere. It localises to the telomere. The protein resides in the cytoplasm. The protein localises to the cytoskeleton. It is found in the microtubule organizing center. Its subcellular location is the centrosome. It localises to the kinetochore. Functionally, required for G1/S transition. Recruits and stabilizes the origin recognition complex (ORC) onto chromatin during G1 to establish pre-replication complex (preRC) and to heterochromatic sites in post-replicated cells. Binds a combination of DNA and histone methylation repressive marks on heterochromatin. Required for silencing of major satellite repeats. May be important ORC2, ORC3 and ORC4 stability. This chain is Leucine-rich repeat and WD repeat-containing protein 1 (lrwd1), found in Danio rerio (Zebrafish).